A 402-amino-acid polypeptide reads, in one-letter code: Multidrug resistance protein MdtH (402 aa).

The Cytoplasmic segment spans residues 1-12 (MSRVSQARNLGK). A helical membrane pass occupies residues 13–33 (YFLLIDNMLVVLGFFVVFPLI). Residues 34–98 (SIRFVDQMGW…GFATMGIAHE (65 aa)) lie on the Periplasmic side of the membrane. Residues 99-116 (PWLLWFSCLLSGLGGTLF) form a helical membrane-spanning segment. Topologically, residues 117 to 138 (DPPRSALVVKLIRPQQRGRFFS) are cytoplasmic. Residues 139-159 (LLMMQDSAGAVIGALLGSWLL) form a helical membrane-spanning segment. Residues 160 to 164 (QYDFR) lie on the Periplasmic side of the membrane. Residues 165-185 (LVCATGAVLFVLCAAFNAWLL) traverse the membrane as a helical segment. Residues 186–213 (PAWKLSTVRTPVREGMTRVMRDKRFVTY) lie on the Cytoplasmic side of the membrane. Residues 214-234 (VLTLAGYYMLAVQVMLMLPIM) traverse the membrane as a helical segment. Residues 235–243 (VNDVAGAPS) are Periplasmic-facing. Residues 244–264 (AVKWMYAIEACLSLTLLYPIA) traverse the membrane as a helical segment. Residues 265–276 (RWSEKHFRLEHR) are Cytoplasmic-facing. A helical membrane pass occupies residues 277-297 (LMAGLLIMSLSMMPVGMVSGL). Residues 298-299 (QQ) are Periplasmic-facing. A helical membrane pass occupies residues 300 to 320 (LFNLICLFYIGSIIAEPARET). Topologically, residues 321–339 (LSASLADARARGSYMGFSR) are cytoplasmic. A helical transmembrane segment spans residues 340–360 (LGLAIGGAIGYIGGGWLFDLG). The Periplasmic segment spans residues 361 to 367 (KSAHQPE). Residues 368–388 (LPWMMLGIIGIFTFLALGWQF) traverse the membrane as a helical segment. At 389–402 (SQKRAARRLLERDA) the chain is on the cytoplasmic side.

Belongs to the major facilitator superfamily. DHA1 family. MdtH (TC 2.A.1.2.21) subfamily.

It localises to the cell inner membrane. In terms of biological role, confers resistance to norfloxacin and enoxacin. This chain is Multidrug resistance protein MdtH, found in Escherichia coli O9:H4 (strain HS).